The sequence spans 956 residues: Calsyntenin-3 (956 aa).

A signal peptide spans 1-20 (MARMSFLSFLLFCLTSVAHG). The Extracellular segment spans residues 21–850 (NKANKHKPWI…PHRNSVVPGA (830 aa)). 2 Cadherin domains span residues 30 to 151 (IETE…SPVF) and 152 to 271 (VERR…IPLF). N-linked (GlcNAc...) asparagine glycosylation is found at Asn-333, Asn-353, Asn-513, and Asn-743. A helical membrane pass occupies residues 851-871 (ATVIIMVCVGFLVVMVILGVF). The Cytoplasmic segment spans residues 872-956 (RIRSIHRRGE…EGRDSAPRRY (85 aa)). A compositionally biased stretch (acidic residues) spans 921–937 (GECEDEEEVVDSPDDTS). Positions 921 to 956 (GECEDEEEVVDSPDDTSDDQRIIIKKEGRDSAPRRY) are disordered. The span at 938–956 (DDQRIIIKKEGRDSAPRRY) shows a compositional bias: basic and acidic residues.

It belongs to the calsyntenin family. As to quaternary structure, homooligomer and heterooligomer; mediates both homophilic and heterophilc interactions with clstn1 and clstn2 paralogs via cadherin domains. Interacts (via cadherin domains) with both alpha and beta isoforms of neurexins. By 48 hours post-fertilization (hpf), widely expressed in the brain, with strong expression in the telencephalon and the midbrain. Not expressed in the optic tectum.

The protein resides in the postsynaptic cell membrane. It localises to the endoplasmic reticulum membrane. Its subcellular location is the golgi apparatus membrane. Functionally, synaptic adhesion molecule. Promotes synapse development by acting as a cell adhesion molecule at the postsynaptic membrane, which associates with presynaptic neurexins. The sequence is that of Calsyntenin-3 from Danio rerio (Zebrafish).